Here is a 247-residue protein sequence, read N- to C-terminus: Cell division protein ZapD (247 aa).

The protein belongs to the ZapD family. In terms of assembly, interacts with FtsZ.

The protein resides in the cytoplasm. Functionally, cell division factor that enhances FtsZ-ring assembly. Directly interacts with FtsZ and promotes bundling of FtsZ protofilaments, with a reduction in FtsZ GTPase activity. This is Cell division protein ZapD from Salmonella arizonae (strain ATCC BAA-731 / CDC346-86 / RSK2980).